Here is an 87-residue protein sequence, read N- to C-terminus: DNA-directed RNA polymerase subunit omega (87 aa).

It belongs to the RNA polymerase subunit omega family. As to quaternary structure, the RNAP catalytic core consists of 2 alpha, 1 beta, 1 beta' and 1 omega subunit. When a sigma factor is associated with the core the holoenzyme is formed, which can initiate transcription.

It catalyses the reaction RNA(n) + a ribonucleoside 5'-triphosphate = RNA(n+1) + diphosphate. Promotes RNA polymerase assembly. Latches the N- and C-terminal regions of the beta' subunit thereby facilitating its interaction with the beta and alpha subunits. The sequence is that of DNA-directed RNA polymerase subunit omega from Alcanivorax borkumensis (strain ATCC 700651 / DSM 11573 / NCIMB 13689 / SK2).